The sequence spans 368 residues: Membrane glycoprotein UL18 (368 aa).

An N-terminal signal peptide occupies residues 1 to 19; sequence MMTMWCLTLFVLWMLRVVG. Residues 326–346 traverse the membrane as a helical segment; that stretch reads ISSVLLALLLCALLFAFLHYF.

Interacts with host LILRB1.

It is found in the host membrane. In terms of biological role, plays a role in the protection against host NK cell cytotoxicity by interacting with and modulating the activity of the host inhibitory leukocyte Ig-like receptor 1/LILRB1, which is expressed on monocytes, dendritic cells, as well as subsets of T and NK cells. UL18 exerts an inhibitory effect on LIR-1+ NK cells, while it stimulates LIR-1- NK cell. The chain is Membrane glycoprotein UL18 (UL18) from Homo sapiens (Human).